We begin with the raw amino-acid sequence, 268 residues long: Purine nucleoside phosphorylase (268 aa).

Phosphate is bound by residues serine 36, histidine 68, 88 to 90 (RIH), and alanine 120. Residue glutamate 189 coordinates a purine D-ribonucleoside. Phosphate is bound at residue serine 208. Position 231 (asparagine 231) interacts with a purine D-ribonucleoside.

It belongs to the PNP/MTAP phosphorylase family. As to quaternary structure, homotrimer.

The enzyme catalyses a purine 2'-deoxy-D-ribonucleoside + phosphate = a purine nucleobase + 2-deoxy-alpha-D-ribose 1-phosphate. It participates in purine metabolism; purine nucleoside salvage. Its function is as follows. The purine nucleoside phosphorylases catalyze the phosphorolytic breakdown of the N-glycosidic bond in the beta-(deoxy)ribonucleoside molecules, with the formation of the corresponding free purine bases and pentose-1-phosphate. Cleaves guanosine, inosine, 2'-deoxyguanosine and 2'-deoxyinosine. The chain is Purine nucleoside phosphorylase (punA) from Mycobacterium bovis (strain ATCC BAA-935 / AF2122/97).